A 376-amino-acid polypeptide reads, in one-letter code: Queuine tRNA-ribosyltransferase (376 aa).

Aspartate 89 serves as the catalytic Proton acceptor. Residues 89-93 (DSGGF), aspartate 143, glutamine 194, and glycine 221 contribute to the substrate site. An RNA binding region spans residues 252–258 (GVGIPSN). Aspartate 271 (nucleophile) is an active-site residue. Residues 276–280 (ARNGR) are RNA binding; important for wobble base 34 recognition. Cysteine 309, cysteine 311, cysteine 314, and histidine 340 together coordinate Zn(2+).

Belongs to the queuine tRNA-ribosyltransferase family. Homodimer. Within each dimer, one monomer is responsible for RNA recognition and catalysis, while the other monomer binds to the replacement base PreQ1. Zn(2+) is required as a cofactor.

The catalysed reaction is 7-aminomethyl-7-carbaguanine + guanosine(34) in tRNA = 7-aminomethyl-7-carbaguanosine(34) in tRNA + guanine. The protein operates within tRNA modification; tRNA-queuosine biosynthesis. Its function is as follows. Catalyzes the base-exchange of a guanine (G) residue with the queuine precursor 7-aminomethyl-7-deazaguanine (PreQ1) at position 34 (anticodon wobble position) in tRNAs with GU(N) anticodons (tRNA-Asp, -Asn, -His and -Tyr). Catalysis occurs through a double-displacement mechanism. The nucleophile active site attacks the C1' of nucleotide 34 to detach the guanine base from the RNA, forming a covalent enzyme-RNA intermediate. The proton acceptor active site deprotonates the incoming PreQ1, allowing a nucleophilic attack on the C1' of the ribose to form the product. After dissociation, two additional enzymatic reactions on the tRNA convert PreQ1 to queuine (Q), resulting in the hypermodified nucleoside queuosine (7-(((4,5-cis-dihydroxy-2-cyclopenten-1-yl)amino)methyl)-7-deazaguanosine). This is Queuine tRNA-ribosyltransferase from Clostridium botulinum (strain Hall / ATCC 3502 / NCTC 13319 / Type A).